Consider the following 553-residue polypeptide: ATP synthase subunit alpha (553 aa).

173–180 (GDRQTGKT) contacts ATP. The segment at 527-553 (EALDPSAVEREEIAVHHRKPSDETAGH) is disordered. Positions 533-553 (AVEREEIAVHHRKPSDETAGH) are enriched in basic and acidic residues.

The protein belongs to the ATPase alpha/beta chains family. In terms of assembly, F-type ATPases have 2 components, CF(1) - the catalytic core - and CF(0) - the membrane proton channel. CF(1) has five subunits: alpha(3), beta(3), gamma(1), delta(1), epsilon(1). CF(0) has three main subunits: a(1), b(2) and c(9-12). The alpha and beta chains form an alternating ring which encloses part of the gamma chain. CF(1) is attached to CF(0) by a central stalk formed by the gamma and epsilon chains, while a peripheral stalk is formed by the delta and b chains.

It localises to the cell membrane. It catalyses the reaction ATP + H2O + 4 H(+)(in) = ADP + phosphate + 5 H(+)(out). Functionally, produces ATP from ADP in the presence of a proton gradient across the membrane. The alpha chain is a regulatory subunit. This Parafrankia sp. (strain EAN1pec) protein is ATP synthase subunit alpha.